A 263-amino-acid chain; its full sequence is Phosphatidylglycerol--prolipoprotein diacylglyceryl transferase (263 aa).

A run of 4 helical transmembrane segments spans residues 10–30, 56–76, 91–111, and 117–137; these read VAIT…LFGF, MVTY…ILFY, IWNG…AMWL, and GLGF…GLFF. Arginine 139 lines the a 1,2-diacyl-sn-glycero-3-phospho-(1'-sn-glycerol) pocket. Transmembrane regions (helical) follow at residues 171-191, 199-219, and 231-251; these read PSQL…LWVF, GHVS…VEFV, and FGWL…GLWL.

The protein belongs to the Lgt family.

It localises to the cell inner membrane. The enzyme catalyses L-cysteinyl-[prolipoprotein] + a 1,2-diacyl-sn-glycero-3-phospho-(1'-sn-glycerol) = an S-1,2-diacyl-sn-glyceryl-L-cysteinyl-[prolipoprotein] + sn-glycerol 1-phosphate + H(+). It participates in protein modification; lipoprotein biosynthesis (diacylglyceryl transfer). Its function is as follows. Catalyzes the transfer of the diacylglyceryl group from phosphatidylglycerol to the sulfhydryl group of the N-terminal cysteine of a prolipoprotein, the first step in the formation of mature lipoproteins. The polypeptide is Phosphatidylglycerol--prolipoprotein diacylglyceryl transferase (Nitratidesulfovibrio vulgaris (strain DP4) (Desulfovibrio vulgaris)).